Reading from the N-terminus, the 457-residue chain is Putative adhesion G protein-coupled receptor E4P (457 aa).

Residues 1–14 form the signal peptide; it reads MGSRFLLVLLSGAS. 6 cysteine pairs are disulfide-bonded: cysteine 15-cysteine 24, cysteine 18-cysteine 30, cysteine 32-cysteine 52, cysteine 58-cysteine 71, cysteine 65-cysteine 80, and cysteine 82-cysteine 103. The 39-residue stretch at 15-53 folds into the EGF-like 1 domain; the sequence is CPPCPKYASCHNSTHCTCEDGFRARSGRTYFHDSSEKCE. Topologically, residues 16–191 are extracellular; sequence PPCPKYASCH…LAPKEDPVLT (176 aa). Residue asparagine 26 is glycosylated (N-linked (GlcNAc...) asparagine). The EGF-like 2; calcium-binding domain occupies 54 to 104; the sequence is DINECETGLAKCKYKAYCRNKVGGYICSCLVKYTLFNFLAGIIDYDHPDCY. Asparagine 106 and asparagine 162 each carry an N-linked (GlcNAc...) asparagine glycan. One can recognise a GAIN-B domain in the interval 134–186; sequence DKRTKHICVYWEGSEGGWSTEGCSHVHSNGSYTKCKCFHLSSFAVLVALAPKE. 2 cysteine pairs are disulfide-bonded: cysteine 141–cysteine 168 and cysteine 156–cysteine 170. The interval 141-186 is GPS; that stretch reads CVYWEGSEGGWSTEGCSHVHSNGSYTKCKCFHLSSFAVLVALAPKE. Residues 192–212 traverse the membrane as a helical segment; that stretch reads VITQVGLTISLLCLFLAILTF. At 213–223 the chain is on the cytoplasmic side; the sequence is LLCRPIQNTST. A helical membrane pass occupies residues 224 to 244; that stretch reads SLHLELSLCLFLAHLLFLTGI. An N-linked (GlcNAc...) asparagine glycan is attached at asparagine 245. Residues 245–250 lie on the Extracellular side of the membrane; it reads NRTEPE. Residues 251–271 form a helical membrane-spanning segment; sequence VLCSIIAGLLHFLYLACFTWM. Residues 272-299 lie on the Cytoplasmic side of the membrane; that stretch reads LLEGLHLFLTVRNLKVANYTSTGRFKKR. Residues 300–320 traverse the membrane as a helical segment; the sequence is FMYPVGYGIPAVIIAVSAIVG. Over 321–336 the chain is Extracellular; it reads PQNYGTFTCWLKLDKG. Residues 337-357 traverse the membrane as a helical segment; sequence FIWSFMGPVAVIILINLVFYF. Over 358–384 the chain is Cytoplasmic; it reads QVLWILRSKLSSLNKEVSTIQDTRVMT. The helical transmembrane segment at 385 to 405 threads the bilayer; sequence FKAISQLFILGCSWGLGFFMV. The Extracellular portion of the chain corresponds to 406–413; the sequence is EEVGKTIG. Residues 414–434 traverse the membrane as a helical segment; that stretch reads SIIAYSFTIINTLQGVLLFVV. At 435–457 the chain is on the cytoplasmic side; the sequence is HCLLNRQVRLIILSVISLVPKSN.

It belongs to the G-protein coupled receptor 2 family. Adhesion G-protein coupled receptor (ADGR) subfamily. Forms a heterodimer, consisting of a large extracellular region (alpha subunit) non-covalently linked to a seven-transmembrane moiety (beta subunit). Post-translationally, glycosylated. Proteolytically cleaved into 2 subunits, an extracellular alpha subunit and a seven-transmembrane subunit.

The protein resides in the cell membrane. It is found in the secreted. In terms of biological role, may mediate the cellular interaction between myeloid cells and B-cells. This Homo sapiens (Human) protein is Putative adhesion G protein-coupled receptor E4P.